A 185-amino-acid chain; its full sequence is Meiotically up-regulated gene 5 protein (185 aa).

Its subcellular location is the cytoplasm. Required for correct meiotic chromosome segregation. This is Meiotically up-regulated gene 5 protein (mug5) from Schizosaccharomyces pombe (strain 972 / ATCC 24843) (Fission yeast).